We begin with the raw amino-acid sequence, 369 residues long: MTTKLIPAQQYHDIFIAGQPLIDLRAPIEFDRGAFPSSVNLPLMVDKEREKVGTCYKEQGQQAAIALGHSLVHGVVKQQRIDAWLNFLSAHPQAYLYCFRGGLRSQLTQQWLQEAGVTVPYVQGGYKGMRQYLIGVIEAAPSLQPLLSLSGMTGSGKTDFLKRRKEAIDLEGIANHRGSSFGKNIDPQPTQINFENRLAIALLHHQLGNHACLLLEDESFLIGRSALPQSFYSAMQTADIVVLEEDDDIRLTRLLDEYVHKMHRGFIERLGLEAGFEAFSHYLLQSLGSIRKRLGGKQYQELQDIMQQALSQQLNQNQTSQHLAWISLLLHKYYDPMYEYQLQKKAGNILFRGSHQATHEWLDNYQSER.

The 124-residue stretch at 15-138 (FIAGQPLIDL…MRQYLIGVIE (124 aa)) folds into the Rhodanese domain. Residue Cys98 is the S-selanylcysteine intermediate of the active site.

Belongs to the SelU family. Monomer.

It carries out the reaction 5-methylaminomethyl-2-thiouridine(34) in tRNA + selenophosphate + (2E)-geranyl diphosphate + H2O + H(+) = 5-methylaminomethyl-2-selenouridine(34) in tRNA + (2E)-thiogeraniol + phosphate + diphosphate. The catalysed reaction is 5-methylaminomethyl-2-thiouridine(34) in tRNA + (2E)-geranyl diphosphate = 5-methylaminomethyl-S-(2E)-geranyl-thiouridine(34) in tRNA + diphosphate. The enzyme catalyses 5-methylaminomethyl-S-(2E)-geranyl-thiouridine(34) in tRNA + selenophosphate + H(+) = 5-methylaminomethyl-2-(Se-phospho)selenouridine(34) in tRNA + (2E)-thiogeraniol. It catalyses the reaction 5-methylaminomethyl-2-(Se-phospho)selenouridine(34) in tRNA + H2O = 5-methylaminomethyl-2-selenouridine(34) in tRNA + phosphate. Its function is as follows. Involved in the post-transcriptional modification of the uridine at the wobble position (U34) of tRNA(Lys), tRNA(Glu) and tRNA(Gln). Catalyzes the conversion of 2-thiouridine (S2U-RNA) to 2-selenouridine (Se2U-RNA). Acts in a two-step process involving geranylation of 2-thiouridine (S2U) to S-geranyl-2-thiouridine (geS2U) and subsequent selenation of the latter derivative to 2-selenouridine (Se2U) in the tRNA chain. This Shewanella sp. (strain MR-7) protein is tRNA 2-selenouridine synthase.